Consider the following 160-residue polypeptide: S-ribosylhomocysteine lyase (160 aa).

Residues His-57, His-61, and Cys-127 each contribute to the Fe cation site.

This sequence belongs to the LuxS family. As to quaternary structure, homodimer. Requires Fe cation as cofactor.

It carries out the reaction S-(5-deoxy-D-ribos-5-yl)-L-homocysteine = (S)-4,5-dihydroxypentane-2,3-dione + L-homocysteine. Involved in the synthesis of autoinducer 2 (AI-2) which is secreted by bacteria and is used to communicate both the cell density and the metabolic potential of the environment. The regulation of gene expression in response to changes in cell density is called quorum sensing. Catalyzes the transformation of S-ribosylhomocysteine (RHC) to homocysteine (HC) and 4,5-dihydroxy-2,3-pentadione (DPD). In Streptococcus pneumoniae (strain CGSP14), this protein is S-ribosylhomocysteine lyase.